We begin with the raw amino-acid sequence, 348 residues long: Protein RecA (348 aa).

Residue 65 to 72 (GPESSGKT) coordinates ATP. Positions 326-348 (QMGSESLSSSSDDDDIKEESGEE) are disordered. Over residues 336–348 (SDDDDIKEESGEE) the composition is skewed to acidic residues.

This sequence belongs to the RecA family.

The protein resides in the cytoplasm. Its function is as follows. Can catalyze the hydrolysis of ATP in the presence of single-stranded DNA, the ATP-dependent uptake of single-stranded DNA by duplex DNA, and the ATP-dependent hybridization of homologous single-stranded DNAs. It interacts with LexA causing its activation and leading to its autocatalytic cleavage. In Campylobacter hominis (strain ATCC BAA-381 / DSM 21671 / CCUG 45161 / LMG 19568 / NCTC 13146 / CH001A), this protein is Protein RecA.